We begin with the raw amino-acid sequence, 812 residues long: Outer membrane usher protein FaeD (812 aa).

A signal peptide spans 1–35; the sequence is MKKYVTTKSVQPVAFRLTTLSLVMSAVLGSASVIA. Cys-793 and Cys-811 are joined by a disulfide.

Belongs to the fimbrial export usher family.

It is found in the cell outer membrane. Involved in the export and assembly of K88ab fimbrial subunits across the outer membrane. The sequence is that of Outer membrane usher protein FaeD (faeD) from Escherichia coli.